The chain runs to 509 residues: Ribonuclease Y (509 aa).

A helical transmembrane segment spans residues 1 to 21 (MIILVAVVTAVISFGLGYVVA). The KH domain maps to 199–259 (TVSTVSLPSD…IRREIARLTL (61 aa)). One can recognise an HD domain in the interval 325-418 (VLDHSIEVAQ…VAAADALSAA (94 aa)).

The protein belongs to the RNase Y family.

Its subcellular location is the cell membrane. In terms of biological role, endoribonuclease that initiates mRNA decay. The sequence is that of Ribonuclease Y from Pseudothermotoga lettingae (strain ATCC BAA-301 / DSM 14385 / NBRC 107922 / TMO) (Thermotoga lettingae).